A 279-amino-acid polypeptide reads, in one-letter code: Zinc-finger homeodomain protein 1 (279 aa).

Positions 1–30 (MEFEDNNNNNDEEQEEDMNLHEEEEDDDAV) are enriched in acidic residues. Residues 1–62 (MEFEDNNNNN…TTSTGGGGGF (62 aa)) form a disordered region. Residues 75–124 (FRECLKNQAVNIGGHAVDGCGEFMPAGIEGTIDALKCAACGCHRNFHRKE) form a ZF-HD dimerization-type zinc finger. Disordered stretches follow at residues 128-199 (FHHA…TKFT) and 245-279 (NNKH…QDQP). Residues 134–143 (QHQPPPPPPG) are compositionally biased toward pro residues. A DNA-binding region (homeobox; atypical) is located at residues 191–254 (RKRHRTKFTA…NNKHTLGKSP (64 aa)).

Homo- and heterodimer with other ZFHD proteins. Interacts with MIF1 and MIF2; these interactions prevent nuclear localization and DNA-binding to inhibit transcription regulation activity. Binds to ZHD2, ZHD3, ZHD4, ZHD5, ZHD6, ZHD7, ZHD8, ZHD9, ZHD10 and ZHD11. As to expression, mostly expressed in flowers and inflorescence.

It is found in the nucleus. Putative transcription factor. This Arabidopsis thaliana (Mouse-ear cress) protein is Zinc-finger homeodomain protein 1 (ZHD1).